A 219-amino-acid chain; its full sequence is Ribose-5-phosphate isomerase A (219 aa).

Substrate contacts are provided by residues 28-31, 81-84, and 94-97; these read TGST, DGAD, and KGGG. E103 (proton acceptor) is an active-site residue. Residue K121 participates in substrate binding.

Belongs to the ribose 5-phosphate isomerase family. In terms of assembly, homodimer.

It catalyses the reaction aldehydo-D-ribose 5-phosphate = D-ribulose 5-phosphate. It functions in the pathway carbohydrate degradation; pentose phosphate pathway; D-ribose 5-phosphate from D-ribulose 5-phosphate (non-oxidative stage): step 1/1. Functionally, catalyzes the reversible conversion of ribose-5-phosphate to ribulose 5-phosphate. In Shewanella sp. (strain MR-4), this protein is Ribose-5-phosphate isomerase A.